Consider the following 249-residue polypeptide: 1-(5-phosphoribosyl)-5-[(5-phosphoribosylamino)methylideneamino] imidazole-4-carboxamide isomerase (249 aa).

The active-site Proton acceptor is the Asp8. The active-site Proton donor is Asp131.

It belongs to the HisA/HisF family.

Its subcellular location is the cytoplasm. The catalysed reaction is 1-(5-phospho-beta-D-ribosyl)-5-[(5-phospho-beta-D-ribosylamino)methylideneamino]imidazole-4-carboxamide = 5-[(5-phospho-1-deoxy-D-ribulos-1-ylimino)methylamino]-1-(5-phospho-beta-D-ribosyl)imidazole-4-carboxamide. It functions in the pathway amino-acid biosynthesis; L-histidine biosynthesis; L-histidine from 5-phospho-alpha-D-ribose 1-diphosphate: step 4/9. The polypeptide is 1-(5-phosphoribosyl)-5-[(5-phosphoribosylamino)methylideneamino] imidazole-4-carboxamide isomerase (Nitrosomonas europaea (strain ATCC 19718 / CIP 103999 / KCTC 2705 / NBRC 14298)).